Consider the following 339-residue polypeptide: Adenylosuccinate synthetase (339 aa).

GTP-binding positions include 12–18 (GDEGKGS) and 42–44 (GHS). Asp-13 (proton acceptor) is an active-site residue. The Mg(2+) site is built by Asp-13 and Gly-42. IMP contacts are provided by residues 13 to 16 (DEGK), 40 to 43 (NAGH), Thr-127, Arg-141, Gln-179, Thr-194, and Arg-256. The active-site Proton donor is His-43. 252–258 (TVTGRRR) serves as a coordination point for substrate. GTP is bound by residues Arg-258, 284 to 286 (MLD), and 324 to 326 (KTG).

The protein belongs to the adenylosuccinate synthetase family. Homodimer. The cofactor is Mg(2+).

The protein resides in the cytoplasm. The catalysed reaction is IMP + L-aspartate + GTP = N(6)-(1,2-dicarboxyethyl)-AMP + GDP + phosphate + 2 H(+). The protein operates within purine metabolism; AMP biosynthesis via de novo pathway; AMP from IMP: step 1/2. Plays an important role in the de novo pathway of purine nucleotide biosynthesis. Catalyzes the first committed step in the biosynthesis of AMP from IMP. This chain is Adenylosuccinate synthetase, found in Thermococcus onnurineus (strain NA1).